An 853-amino-acid chain; its full sequence is MICAL-like protein 1 (853 aa).

The 107-residue stretch at 2-108 folds into the Calponin-homology (CH) domain; it reads AGPRGALLAW…YVSQYYNHFA (107 aa). Disordered regions lie at residues 118–162 and 224–659; these read PRKG…TPSS and SGRS…FPLI. A compositionally biased stretch (polar residues) spans 145 to 162; it reads ECSSGSLSKQGSHRTPSS. In terms of domain architecture, LIM zinc-binding spans 162-224; that stretch reads STCAACQQHV…AEHCARLGPS (63 aa). Residues S292 and S306 each carry the phosphoserine modification. Phosphothreonine occurs at positions 312 and 315. Positions 355 to 366 are enriched in basic and acidic residues; it reads LSERTPAPRKDP. The span at 381-394 shows a compositional bias: pro residues; sequence APLPPSSSPGPPPG. S388 bears the Phosphoserine mark. Positions 419–421 match the NPF1 motif; sequence NPF. Residues 429–445 are compositionally biased toward pro residues; it reads PAAPSPAPGPAPTPPES. Phosphothreonine occurs at positions 457 and 459. 4 positions are modified to phosphoserine: S460, S461, S474, and S476. Composition is skewed to low complexity over residues 495-515 and 541-553; these read PSPALSVESLSSESSSQAPSE and SASLSANSSLSSS. A phosphoserine mark is found at S568 and S611. Polar residues predominate over residues 607 to 618; that stretch reads PGTSSPQLQVKS. The short motif at 623–625 is the NPF2 element; sequence NPF. The interval 642–853 is mediates the interaction with RAB13 and RAB35 and intramolecular interaction with the CH domain; that stretch reads KGSKPARPPA…TKSKCPGDRS (212 aa). Residues 661–808 enclose the bMERB domain; it reads RKVQSDQYIP…EEEEDKMLEA (148 aa). Residues 671 to 701 are a coiled coil; the sequence is EEDIHGEIDTIERQLDALEHRGVLLEEKLRG. Residues 690 to 853 are necessary and sufficient to associate with tubular recycling endosome membranes, mediate phosphatidic acid-binding and membrane tubulation; that stretch reads HRGVLLEEKL…TKSKCPGDRS (164 aa). S730 carries the phosphoserine modification. A coiled-coil region spans residues 791 to 820; that stretch reads CLDEDRQREEEEDKMLEAMIKKKEFQKETE.

Homooligomer. Interacts (via NPF1 motif) with EHD1 (via EH domain); the interaction is direct and probably recruits EHD1 to membranes. Interacts with EHD3 (via EH domain). Interacts with RAB35 (GTP-bound form); the interaction is direct and probably recruits MICALL1 to membranes. Interacts with ACAP2; the interaction is indirect through RAB35. Interacts with RAB8A (GTP-bound form); regulates RAB8A association with recycling endosomes. Interacts with RAB13 (GTP-bound form). Interacts with ARF6 (GTP-bound form). Interacts with PACSIN2 (via the SH3 domain). Interacts with DPYSL2.

Its subcellular location is the recycling endosome membrane. It is found in the late endosome membrane. The protein localises to the cell projection. The protein resides in the cilium membrane. It localises to the cytoplasm. Its subcellular location is the cytoskeleton. It is found in the microtubule organizing center. The protein localises to the centrosome. The protein resides in the centriole. Lipid-binding protein with higher affinity for phosphatidic acid, a lipid enriched in recycling endosome membranes. On endosome membranes, acts as a downstream effector of Rab proteins recruiting cytosolic proteins to regulate membrane tubulation. Involved in a late step of receptor-mediated endocytosis regulating for instance endocytosed-EGF receptor trafficking. Alternatively, regulates slow endocytic recycling of endocytosed proteins back to the plasma membrane. Also involved in cargo protein delivery to the plasma membrane. Plays a role in ciliogenesis coordination, recruits EHD1 to primary cilium where it is anchored to the centriole through interaction with tubulins. May indirectly play a role in neurite outgrowth. This chain is MICAL-like protein 1 (MICALL1), found in Bos taurus (Bovine).